A 712-amino-acid chain; its full sequence is Ribosomal RNA large subunit methyltransferase K/L (712 aa).

A THUMP domain is found at 43-154; that stretch reads TAYRCCLWTR…GEKGVLGLDM (112 aa).

Belongs to the methyltransferase superfamily. RlmKL family.

Its subcellular location is the cytoplasm. It catalyses the reaction guanosine(2445) in 23S rRNA + S-adenosyl-L-methionine = N(2)-methylguanosine(2445) in 23S rRNA + S-adenosyl-L-homocysteine + H(+). It carries out the reaction guanosine(2069) in 23S rRNA + S-adenosyl-L-methionine = N(2)-methylguanosine(2069) in 23S rRNA + S-adenosyl-L-homocysteine + H(+). Its function is as follows. Specifically methylates the guanine in position 2445 (m2G2445) and the guanine in position 2069 (m7G2069) of 23S rRNA. The sequence is that of Ribosomal RNA large subunit methyltransferase K/L from Photobacterium profundum (strain SS9).